Here is a 426-residue protein sequence, read N- to C-terminus: S-adenosylmethionine synthase (426 aa).

Residue H22 coordinates ATP. Position 24 (D24) interacts with Mg(2+). E50 is a K(+) binding site. E63 and Q106 together coordinate L-methionine. Residues 106-116 (QSPDISQGVTA) form a flexible loop region. Residues 181-183 (DGK), 257-258 (KF), D266, 272-273 (RK), A289, and K293 contribute to the ATP site. D266 lines the L-methionine pocket. K297 is an L-methionine binding site.

Belongs to the AdoMet synthase family. In terms of assembly, homotetramer; dimer of dimers. Mg(2+) is required as a cofactor. K(+) serves as cofactor.

It is found in the cytoplasm. It carries out the reaction L-methionine + ATP + H2O = S-adenosyl-L-methionine + phosphate + diphosphate. It participates in amino-acid biosynthesis; S-adenosyl-L-methionine biosynthesis; S-adenosyl-L-methionine from L-methionine: step 1/1. Catalyzes the formation of S-adenosylmethionine (AdoMet) from methionine and ATP. The overall synthetic reaction is composed of two sequential steps, AdoMet formation and the subsequent tripolyphosphate hydrolysis which occurs prior to release of AdoMet from the enzyme. This Synechocystis sp. (strain ATCC 27184 / PCC 6803 / Kazusa) protein is S-adenosylmethionine synthase.